A 498-amino-acid polypeptide reads, in one-letter code: MIGDFEIKDEDLAGRIGILETKHGKLETPAFFPVINPVKNEITIQDILSVGFESIITNAFLIKKYIGKEEDLHSILNYNKILMTDSGAYQILQYGDIDVSNVDIVNYETKLKPDIAVILDIPTGLTEDKKEAEKSVESTISRAKEASKFVELSKDEIIWVHPIQGGMYLDLIEYSARIADMNQDYKMLALGSPTVLMQRYEYAPLIDMIYKSKSNVSRGKPFHLFGGGHPHIFAFAVALGVDTFDSASYILYARDHRYMTRERVYRLEELDYFPCSCPICSRYSPKDVMEMPEEQKVRLIALHNLYVIKEEINYIKQSLKEGRLFEYIQQKAYSHPSTFEAFRRILNYSKYLEKYDPRVKGEVKGVFLFDNSSLHRPEVIRHAYTLSKIKQRSKALVLYCSDSKDNPLKNTEDMKNADVYIVLPFYGCVPYNVFFTYPYFQSEMPSTIDKDVIYDLKNKLKEFLSQRSYETVSIIGCEKILHVDSIRGAPVNLLLNKL.

Catalysis depends on D85, which acts as the Nucleophile. Residue D120 participates in substrate binding. C275, C277, and C280 together coordinate Zn(2+).

This sequence belongs to the archaeosine tRNA-ribosyltransferase family. Zn(2+) is required as a cofactor.

It catalyses the reaction guanosine(15) in tRNA + 7-cyano-7-deazaguanine = 7-cyano-7-carbaguanosine(15) in tRNA + guanine. Its pathway is tRNA modification; archaeosine-tRNA biosynthesis. Exchanges the guanine residue with 7-cyano-7-deazaguanine (preQ0) at position 15 in the dihydrouridine loop (D-loop) of archaeal tRNAs. This chain is tRNA-guanine(15) transglycosylase, found in Sulfolobus acidocaldarius (strain ATCC 33909 / DSM 639 / JCM 8929 / NBRC 15157 / NCIMB 11770).